Consider the following 261-residue polypeptide: Chanoclavine-I dehydrogenase easD (261 aa).

NADP(+) is bound by residues Ile-18, Lys-48, Asp-66, Arg-132, Tyr-166, Lys-170, and Thr-201. The active-site Proton donor is the Tyr-166. Lys-170 (lowers pKa of active site Tyr) is an active-site residue.

Belongs to the short-chain dehydrogenases/reductases (SDR) family.

It carries out the reaction chanoclavine-I + NAD(+) = chanoclavine-I aldehyde + NADH + H(+). The protein operates within alkaloid biosynthesis; ergot alkaloid biosynthesis. Chanoclavine-I dehydrogenase; part of the gene cluster that mediates the biosynthesis of fumiclavanine C, a fungal ergot alkaloid. DmaW catalyzes the first step of ergot alkaloid biosynthesis by condensing dimethylallyl diphosphate (DMAP) and tryptophan to form 4-dimethylallyl-L-tryptophan. The second step is catalyzed by the methyltransferase easF that methylates 4-dimethylallyl-L-tryptophan in the presence of S-adenosyl-L-methionine, resulting in the formation of 4-dimethylallyl-L-abrine. The catalase easC and the FAD-dependent oxidoreductase easE then transform 4-dimethylallyl-L-abrine to chanoclavine-I which is further oxidized by EasD in the presence of NAD(+), resulting in the formation of chanoclavine-I aldehyde. EasA reduces chanoclavine-I aldehyde to dihydrochanoclavine-I aldehyde that spontaneously dehydrates to form 6,8-dimethyl-6,7-didehydroergoline. EasG then catalyzes the reduction of 6,8-dimethyl-6,7-didehydroergoline to form festuclavine. Hydrolysis of festuclavine by easM then leads to the formation of fumigaclavine B which is in turn acetylated by easN to fumigaclavine A. Finally, easL catalyzes the conversion of fumigaclavine A into fumigaclavine C by attaching a dimethylallyl moiety to C-2 of the indole nucleus. The chain is Chanoclavine-I dehydrogenase easD from Aspergillus fumigatus (strain ATCC MYA-4609 / CBS 101355 / FGSC A1100 / Af293) (Neosartorya fumigata).